Here is a 384-residue protein sequence, read N- to C-terminus: Mannitol-1-phosphate 5-dehydrogenase (384 aa).

3 to 14 (ALHFGAGNIGRG) provides a ligand contact to NAD(+).

This sequence belongs to the mannitol dehydrogenase family.

The catalysed reaction is D-mannitol 1-phosphate + NAD(+) = beta-D-fructose 6-phosphate + NADH + H(+). The polypeptide is Mannitol-1-phosphate 5-dehydrogenase (mtlD) (Clostridium acetobutylicum (strain ATCC 824 / DSM 792 / JCM 1419 / IAM 19013 / LMG 5710 / NBRC 13948 / NRRL B-527 / VKM B-1787 / 2291 / W)).